Reading from the N-terminus, the 156-residue chain is Arginine repressor (156 aa).

It belongs to the ArgR family.

Its subcellular location is the cytoplasm. It functions in the pathway amino-acid biosynthesis; L-arginine biosynthesis [regulation]. Functionally, regulates arginine biosynthesis genes. This chain is Arginine repressor, found in Proteus mirabilis (strain HI4320).